We begin with the raw amino-acid sequence, 140 residues long: Acyl-coenzyme A thioesterase 13 (140 aa).

Position 1 is an N-acetylmethionine (Met1). At Thr2 the chain carries N-acetylthreonine; in Acyl-coenzyme A thioesterase 13, N-terminally processed. Residues Lys27, Lys37, and Lys43 each carry the N6-acetyllysine modification. Glu46 contacts CoA. Residues Asn50 and Gly81 each contribute to the substrate site. Residues Ser83, 90 to 95 (YMSPAK), and 108 to 113 (KQGKTL) each bind CoA. Residues Lys108 and Lys127 each carry the N6-acetyllysine modification. Residue His137 coordinates CoA.

This sequence belongs to the thioesterase PaaI family. In terms of assembly, homotetramer. Interacts with PCTP.

Its subcellular location is the cytoplasm. It localises to the cytosol. The protein localises to the mitochondrion. It is found in the nucleus. The protein resides in the cytoskeleton. Its subcellular location is the spindle. The enzyme catalyses a fatty acyl-CoA + H2O = a fatty acid + CoA + H(+). It catalyses the reaction decanoyl-CoA + H2O = decanoate + CoA + H(+). The catalysed reaction is octanoyl-CoA + H2O = octanoate + CoA + H(+). It carries out the reaction butanoyl-CoA + H2O = butanoate + CoA + H(+). The enzyme catalyses hexanoyl-CoA + H2O = hexanoate + CoA + H(+). It catalyses the reaction tetradecanoyl-CoA + H2O = tetradecanoate + CoA + H(+). The catalysed reaction is hexadecanoyl-CoA + H2O = hexadecanoate + CoA + H(+). It carries out the reaction dodecanoyl-CoA + H2O = dodecanoate + CoA + H(+). The enzyme catalyses (9Z)-octadecenoyl-CoA + H2O = (9Z)-octadecenoate + CoA + H(+). It catalyses the reaction (5Z,8Z,11Z,14Z)-eicosatetraenoyl-CoA + H2O = (5Z,8Z,11Z,14Z)-eicosatetraenoate + CoA + H(+). Functionally, catalyzes the hydrolysis of acyl-CoAs into free fatty acids and coenzyme A (CoASH), regulating their respective intracellular levels. Has acyl-CoA thioesterase activity towards medium (C12) and long-chain (C18) fatty acyl-CoA substrates. Can also hydrolyze 3-hydroxyphenylacetyl-CoA and 3,4-dihydroxyphenylacetyl-CoA (in vitro). May play a role in controlling adaptive thermogenesis. The protein is Acyl-coenzyme A thioesterase 13 of Homo sapiens (Human).